Consider the following 472-residue polypeptide: Uronate isomerase (472 aa).

This sequence belongs to the metallo-dependent hydrolases superfamily. Uronate isomerase family.

The catalysed reaction is D-glucuronate = D-fructuronate. It carries out the reaction aldehydo-D-galacturonate = keto-D-tagaturonate. It functions in the pathway carbohydrate metabolism; pentose and glucuronate interconversion. The protein is Uronate isomerase of Xanthomonas euvesicatoria pv. vesicatoria (strain 85-10) (Xanthomonas campestris pv. vesicatoria).